Here is a 115-residue protein sequence, read N- to C-terminus: Large ribosomal subunit protein bL20 (115 aa).

Belongs to the bacterial ribosomal protein bL20 family.

In terms of biological role, binds directly to 23S ribosomal RNA and is necessary for the in vitro assembly process of the 50S ribosomal subunit. It is not involved in the protein synthesizing functions of that subunit. The chain is Large ribosomal subunit protein bL20 from Salinibacter ruber (strain DSM 13855 / M31).